A 251-amino-acid polypeptide reads, in one-letter code: Triosephosphate isomerase (251 aa).

Asparagine 10 and lysine 12 together coordinate substrate. The active-site Electrophile is the histidine 96. Glutamate 168 functions as the Proton acceptor in the catalytic mechanism.

This sequence belongs to the triosephosphate isomerase family. In terms of assembly, homodimer.

The catalysed reaction is D-glyceraldehyde 3-phosphate = dihydroxyacetone phosphate. It functions in the pathway carbohydrate biosynthesis; gluconeogenesis. The protein operates within carbohydrate degradation; glycolysis; D-glyceraldehyde 3-phosphate from glycerone phosphate: step 1/1. This chain is Triosephosphate isomerase (tpiA), found in Aspergillus oryzae (strain ATCC 42149 / RIB 40) (Yellow koji mold).